Consider the following 198-residue polypeptide: Snake venom metalloproteinase BpirMP (198 aa).

In terms of domain architecture, Peptidase M12B spans 1–197; it reads TYIEVAVVAD…HNPQCILNEP (197 aa). The Ca(2+) site is built by Glu-4 and Asp-88. Intrachain disulfides connect Cys-112–Cys-192, Cys-152–Cys-176, and Cys-154–Cys-159. His-137 contacts Zn(2+). The active site involves Glu-138. Residues His-141 and His-147 each coordinate Zn(2+). 2 residues coordinate Ca(2+): Cys-192 and Asn-195.

This sequence belongs to the venom metalloproteinase (M12B) family. P-I subfamily. Monomer. Zn(2+) serves as cofactor. As to expression, expressed by the venom gland.

Its subcellular location is the secreted. Inhibited by the chelating agents EDTA, EGTA and 1,10-phenanthroline. Is not inhibited by serine proteinase inhibitors aprotinin, leupeptin and benzamidine. Zinc metalloprotease that preferentially degrades Aalpha chain of fibrinogen (FGA) (at a dose of 5 ug, whereas at a dose of 10 ug, both FGA and FGB are completely degraded). Degrades fibrin gel in a dose-dependent manner, as well blood clots formed in vitro (thrombolytic activity). Induces hemorrhage (in the dorsal skin of mice), with an MHD of 50 ug. The basal membrane components collagen (all chains of type IV) (COL4A4), fibronectin (FN1), laminin and nidogen are all degraded by this toxin. The chain is Snake venom metalloproteinase BpirMP from Bothrops pirajai (Piraja's lancehead).